Here is a 260-residue protein sequence, read N- to C-terminus: uncharacterized protein (260 aa).

This is an uncharacterized protein from Caenorhabditis elegans.